Reading from the N-terminus, the 224-residue chain is ATP-dependent dethiobiotin synthetase BioD (224 aa).

13 to 18 (NVGKTI) contributes to the ATP binding site. Thr17 is a Mg(2+) binding site. Lys38 is an active-site residue. Ser42 lines the substrate pocket. ATP is bound by residues Asp55, 116-119 (EGAG), 176-177 (NN), and Asn211. Asp55 and Glu116 together coordinate Mg(2+).

This sequence belongs to the dethiobiotin synthetase family. Homodimer. It depends on Mg(2+) as a cofactor.

It is found in the cytoplasm. The enzyme catalyses (7R,8S)-7,8-diammoniononanoate + CO2 + ATP = (4R,5S)-dethiobiotin + ADP + phosphate + 3 H(+). The protein operates within cofactor biosynthesis; biotin biosynthesis; biotin from 7,8-diaminononanoate: step 1/2. In terms of biological role, catalyzes a mechanistically unusual reaction, the ATP-dependent insertion of CO2 between the N7 and N8 nitrogen atoms of 7,8-diaminopelargonic acid (DAPA, also called 7,8-diammoniononanoate) to form a ureido ring. In Buchnera aphidicola subsp. Acyrthosiphon pisum (strain 5A), this protein is ATP-dependent dethiobiotin synthetase BioD.